The following is a 1317-amino-acid chain: Putative late blight resistance protein homolog R1B-14 (1317 aa).

Coiled coils occupy residues 419–442 (RYSDSLAFLKNQLQVIQTEFESLQ) and 535–556 (RMNEEIVGFKDVIENLRNRLLN). Residues 521 to 823 (TVITHTSSQL…SESFIKSSEG (303 aa)) enclose the NB-ARC domain. ATP is bound at residue 568-575 (GMPGLGKT). LRR repeat units follow at residues 944 to 968 (FKFLKVLDLEHQVVIDFIPTELFYL), 987 to 1015 (LWNLETLILKSTPVGRHNTLLLPSTIWDM), 1090 to 1114 (PIRLEILKLYRSKAFKTIPFCISAP), 1138 to 1161 (LKHLEVLKLCDLEFGDHREWKVSN), 1164 to 1186 (FPQLKILKLEYLSLMKWIVADDA), and 1187 to 1211 (FPNLEQLVLHGCQDLMEIPSCFMDI). The 67-residue stretch at 1251–1317 (IKKMVLKFDI…VSKLRKRGML (67 aa)) folds into the HMA domain.

The protein belongs to the disease resistance NB-LRR family.

The protein resides in the cytoplasm. The protein localises to the membrane. Confers resistance to late blight (Phytophthora infestans) races carrying the avirulence gene Avr1. Resistance proteins guard the plant against pathogens that contain an appropriate avirulence protein via an indirect interaction with this avirulence protein. That triggers a defense system including the hypersensitive response, which restricts the pathogen growth. The chain is Putative late blight resistance protein homolog R1B-14 (R1B-14) from Solanum demissum (Wild potato).